A 238-amino-acid chain; its full sequence is Ribosomal RNA small subunit methyltransferase G (238 aa).

Residues glycine 77, phenylalanine 82, 128-129, and arginine 147 each bind S-adenosyl-L-methionine; that span reads AE.

This sequence belongs to the methyltransferase superfamily. RNA methyltransferase RsmG family.

It is found in the cytoplasm. In terms of biological role, specifically methylates the N7 position of guanine in position 535 of 16S rRNA. The protein is Ribosomal RNA small subunit methyltransferase G of Geobacillus kaustophilus (strain HTA426).